The following is a 352-amino-acid chain: Dead end protein homolog 1 (352 aa).

RRM domains follow at residues 58-136 and 138-218; these read SEVY…RSTE and CELT…WLKP. Position 336 is an omega-N-methylarginine (Arg336).

As to quaternary structure, interacts with APOBEC3. In terms of tissue distribution, isoform 1 and isoform 2 are expressed in testis. Isoform 1 is expressed continuously in post natal (PN) testis although levels are low between PN1 to PN6. Isoform 2 is expressed from PN 20 onwards. Isoform 2 is strongly expressed in meiotic and in post-meiotic germ cells of the testis with highest expression at the elongated spermatid stage (at protein level). Expressed in testis and heart. Expressed in germ cells and genital ridges. Not detected in testicular tumors.

Its subcellular location is the nucleus. The protein localises to the cytoplasm. Its function is as follows. RNA-binding factor that positively regulates gene expression by prohibiting miRNA-mediated gene suppression. Relieves miRNA repression in germline cells. Prohibits the function of several miRNAs by blocking the accessibility of target mRNAs. Sequence-specific RNA-binding factor that binds specifically to U-rich regions (URRs) in the 3' untranslated region (3'-UTR) of several mRNAs. Does not bind to miRNAs. Isoform 1 may play a role during primordial germ cell (PGC) survival. However, does not seem to be essential for PGC migration. This is Dead end protein homolog 1 (Dnd1) from Mus musculus (Mouse).